The sequence spans 246 residues: Probable transcriptional regulatory protein CGSHiEE_01480 (246 aa).

This sequence belongs to the TACO1 family.

The protein resides in the cytoplasm. The sequence is that of Probable transcriptional regulatory protein CGSHiEE_01480 from Haemophilus influenzae (strain PittEE).